The primary structure comprises 394 residues: Elongation factor Tu 1 (394 aa).

The tr-type G domain occupies 10–204 (KPHVNVGTIG…ALDSYIPEPQ (195 aa)). The interval 19-26 (GHVDHGKT) is G1. 19-26 (GHVDHGKT) is a GTP binding site. Thr-26 is a Mg(2+) binding site. Residues 60–64 (GITIN) are G2. The interval 81-84 (DCPG) is G3. Residues 81 to 85 (DCPGH) and 136 to 139 (NKCD) each bind GTP. Positions 136–139 (NKCD) are G4. The tract at residues 174 to 176 (SAL) is G5.

Belongs to the TRAFAC class translation factor GTPase superfamily. Classic translation factor GTPase family. EF-Tu/EF-1A subfamily. As to quaternary structure, monomer.

The protein resides in the cytoplasm. It catalyses the reaction GTP + H2O = GDP + phosphate + H(+). Functionally, GTP hydrolase that promotes the GTP-dependent binding of aminoacyl-tRNA to the A-site of ribosomes during protein biosynthesis. The polypeptide is Elongation factor Tu 1 (Shewanella baltica (strain OS195)).